Reading from the N-terminus, the 218-residue chain is Flagellar calcium-binding protein TB-24 (218 aa).

A disordered region spans residues Met1 to Thr27. 4 EF-hand domains span residues Glu48–Leu83, Asp84–Phe119, Tyr130–Trp165, and Val167–Gln202. Positions 61, 63, 65, 67, and 72 each coordinate Ca(2+). Ca(2+) is bound by residues Asp143, Asp145, Ser147, Glu154, Asp180, Asn182, Ser184, and Glu191.

It belongs to the calflagin family.

It localises to the cell projection. The protein resides in the cilium. Its subcellular location is the flagellum. In terms of biological role, may contribute to the rapid motility of the trypanosomes, playing a role either in flagellar structure or in calcium metabolism. Could alternate between a GDP-bound inactive form to a calcium/GTP-bound active form. In Trypanosoma brucei brucei, this protein is Flagellar calcium-binding protein TB-24.